The chain runs to 489 residues: Betaine aldehyde dehydrogenase (489 aa).

Positions 26 and 93 each coordinate K(+). NAD(+) is bound at residue 150-152; sequence GAW. Catalysis depends on lysine 162, which acts as the Charge relay system. Residue 176–179 participates in NAD(+) binding; it reads KPSE. Valine 180 contributes to the K(+) binding site. 229-232 is a binding site for NAD(+); that stretch reads GVET. Position 245 (leucine 245) interacts with K(+). The Proton acceptor role is filled by glutamate 251. Residues glycine 253, cysteine 285, and glutamate 386 each coordinate NAD(+). The Nucleophile role is filled by cysteine 285. Cysteine 285 bears the Cysteine sulfenic acid (-SOH) mark. The K(+) site is built by lysine 456 and glycine 459. Residue glutamate 463 is the Charge relay system of the active site.

It belongs to the aldehyde dehydrogenase family. In terms of assembly, dimer of dimers. K(+) serves as cofactor.

It carries out the reaction betaine aldehyde + NAD(+) + H2O = glycine betaine + NADH + 2 H(+). Its pathway is amine and polyamine biosynthesis; betaine biosynthesis via choline pathway; betaine from betaine aldehyde: step 1/1. Its function is as follows. Involved in the biosynthesis of the osmoprotectant glycine betaine. Catalyzes the irreversible oxidation of betaine aldehyde to the corresponding acid. In Burkholderia mallei (strain SAVP1), this protein is Betaine aldehyde dehydrogenase.